The following is a 251-amino-acid chain: MYVLVLSMGDPVSRTFLDVTGPMPLLKTVGNVEVRKYRDMPVVIHRGDPVEFGAEEVLASLGKWAIFISRHEMANPKPFLTVHTPGAWPDVSVSNPRLVSSLYRALCKVAEEPFDCAIEATHHPPNTSAVSATFLEVGSTEAEWNSRRAVGLLQAALEEAVKGGVEATPTMVIGDLHYTTVGDLVLKGDIDVGHIVPKYVEITLDVVRRAYEKHTVPIRRAILFRKNVKNPTRSEVVEFLKAKGVDVVLKG.

The protein belongs to the DtdA deacylase family. As to quaternary structure, monomer. Zn(2+) serves as cofactor.

It carries out the reaction a D-aminoacyl-tRNA + H2O = a tRNA + a D-alpha-amino acid + H(+). The enzyme catalyses glycyl-tRNA(Ala) + H2O = tRNA(Ala) + glycine + H(+). Its function is as follows. D-aminoacyl-tRNA deacylase with broad substrate specificity. By recycling D-aminoacyl-tRNA to D-amino acids and free tRNA molecules, this enzyme counteracts the toxicity associated with the formation of D-aminoacyl-tRNA entities in vivo. The protein is D-aminoacyl-tRNA deacylase of Pyrobaculum calidifontis (strain DSM 21063 / JCM 11548 / VA1).